The chain runs to 416 residues: Multifunctional CCA protein (416 aa).

ATP contacts are provided by Gly8 and Arg11. Residues Gly8 and Arg11 each coordinate CTP. Mg(2+) is bound by residues Asp21 and Asp23. Residues Arg91, Arg137, and Arg140 each coordinate ATP. CTP contacts are provided by Arg91, Arg137, and Arg140. The HD domain occupies 226–327 (TGVHIMLVID…VNLLERCDAF (102 aa)).

This sequence belongs to the tRNA nucleotidyltransferase/poly(A) polymerase family. Bacterial CCA-adding enzyme type 1 subfamily. Monomer. Can also form homodimers and oligomers. It depends on Mg(2+) as a cofactor. The cofactor is Ni(2+).

It carries out the reaction a tRNA precursor + 2 CTP + ATP = a tRNA with a 3' CCA end + 3 diphosphate. The enzyme catalyses a tRNA with a 3' CCA end + 2 CTP + ATP = a tRNA with a 3' CCACCA end + 3 diphosphate. Functionally, catalyzes the addition and repair of the essential 3'-terminal CCA sequence in tRNAs without using a nucleic acid template. Adds these three nucleotides in the order of C, C, and A to the tRNA nucleotide-73, using CTP and ATP as substrates and producing inorganic pyrophosphate. tRNA 3'-terminal CCA addition is required both for tRNA processing and repair. Also involved in tRNA surveillance by mediating tandem CCA addition to generate a CCACCA at the 3' terminus of unstable tRNAs. While stable tRNAs receive only 3'-terminal CCA, unstable tRNAs are marked with CCACCA and rapidly degraded. This chain is Multifunctional CCA protein, found in Janthinobacterium sp. (strain Marseille) (Minibacterium massiliensis).